A 997-amino-acid polypeptide reads, in one-letter code: Glutamate [NMDA] receptor subunit 1 (997 aa).

Residues 1 to 26 form the signal peptide; it reads MAMAEFVFCRPLFGLAIVLLVAPIDA. At 27–573 the chain is on the extracellular side; it reads AQRHTASDNP…TLVSFLQPFS (547 aa). 7 N-linked (GlcNAc...) asparagine glycosylation sites follow: asparagine 258, asparagine 314, asparagine 345, asparagine 397, asparagine 454, asparagine 481, and asparagine 501. Residues 530–532 and arginine 537 contribute to the glycine site; that span reads PLT. Residues 574–594 traverse the membrane as a helical segment; the sequence is NTLWILVMVSVHVVALVLYLL. The Cytoplasmic portion of the chain corresponds to 595-651; it reads DRFSPFGRFKLSHSDSNEEKALNLSSAVWFAWGVLLNSGIGEGTPRSFSARVLGMVW. Residues 652-672 traverse the membrane as a helical segment; sequence AGFAMIIVASYTANLAAFLVL. The Extracellular segment spans residues 673-831; sequence ERPKTKLSGI…KTPNTLGLKN (159 aa). Residue asparagine 693 is glycosylated (N-linked (GlcNAc...) asparagine). 2 residues coordinate glycine: serine 703 and aspartate 747. A helical membrane pass occupies residues 832–852; the sequence is MAGVFILVGVGIAGGVGLIII. Over 853–997 the chain is Cytoplasmic; that stretch reads EVIYKKHQVK…YTSDVSHLVV (145 aa). A disordered region spans residues 970-997; that stretch reads LGKTRPQQSVLPPRYSPGYTSDVSHLVV. Positions 987-997 are enriched in polar residues; sequence GYTSDVSHLVV.

Belongs to the glutamate-gated ion channel (TC 1.A.10.1) family. Forms a heteromeric NMDA channel with Nmdar2. In terms of tissue distribution, highly expressed in adult heads: in the brain and ring gland. Low expression throughout the entire brain is also seen. Higher expression levels were observed in some scattered cell bodies and part of their fibers, including those from several pairs of DPM (dorsal-posterior-medial) neurons surrounding the calyx, DAL (dorsal-anterior-lateral) and DPL (dorsal-posterior-lateral) neurons in the lateral protocerebrum (LP), VAL (ventral-anterior-lateral) neurons in the anterior protocerebrum, and two pairs of VP (ventral-posterior) neurons in the posterior protocerebrum. Many cell bodies in the optic lobes show preferential expression. Punctuate expression is notably detected in many brain regions including the superior medial protocerebrum. Weakly expressed in the antennal lobes and central complex.

The protein localises to the cell membrane. The protein resides in the postsynaptic cell membrane. It localises to the postsynaptic density. In terms of biological role, NMDA receptor subtype of glutamate-gated ion channels with high calcium permeability and voltage-dependent sensitivity to magnesium. Mediated by glycine. This protein plays a key role in synaptic plasticity, synaptogenesis, excitotoxicity, memory acquisition and learning. It mediates neuronal functions in glutamate neurotransmission. Is involved in the cell surface targeting of NMDA receptors. Plays a role in associative learning and in long-term memory consolidation. The polypeptide is Glutamate [NMDA] receptor subunit 1 (Drosophila melanogaster (Fruit fly)).